Here is a 695-residue protein sequence, read N- to C-terminus: Polyribonucleotide nucleotidyltransferase (695 aa).

D486 and D492 together coordinate Mg(2+). A KH domain is found at 553–612 (PRMIVFKINPEKIRDVIGKGGATIRALTEETGTTIDIVDDGTVKIFSADKADGQEAKRRV). The region spanning 622-690 (GKIYEGRVSR…KQGRVRLSVK (69 aa)) is the S1 motif domain.

Belongs to the polyribonucleotide nucleotidyltransferase family. As to quaternary structure, component of the RNA degradosome, which is a multiprotein complex involved in RNA processing and mRNA degradation. Mg(2+) is required as a cofactor.

The protein resides in the cytoplasm. The catalysed reaction is RNA(n+1) + phosphate = RNA(n) + a ribonucleoside 5'-diphosphate. In terms of biological role, involved in mRNA degradation. Catalyzes the phosphorolysis of single-stranded polyribonucleotides processively in the 3'- to 5'-direction. The chain is Polyribonucleotide nucleotidyltransferase from Nitrosococcus oceani (strain ATCC 19707 / BCRC 17464 / JCM 30415 / NCIMB 11848 / C-107).